The primary structure comprises 874 residues: Probable inorganic carbon transporter subunit DabA (874 aa).

The Zn(2+) site is built by Cys-398, Asp-400, His-580, and Cys-595.

The protein belongs to the inorganic carbon transporter (TC 9.A.2) DabA family. Forms a complex with DabB. Requires Zn(2+) as cofactor.

The protein resides in the cell membrane. Its function is as follows. Part of an energy-coupled inorganic carbon pump. The chain is Probable inorganic carbon transporter subunit DabA from Bacillus cereus (strain 03BB102).